The sequence spans 667 residues: Chaperone protein DnaK (667 aa).

Thr196 bears the Phosphothreonine; by autocatalysis mark. Disordered regions lie at residues 495–525 (EANSGLSDEEIEKMKEEAEQHAEEDERRKER) and 595–667 (AGEE…GDDE). The span at 506–525 (EKMKEEAEQHAEEDERRKER) shows a compositional bias: basic and acidic residues. The span at 595 to 612 (AGEEIREAQQQQAQQGAA) shows a compositional bias: low complexity. The span at 630–641 (GPAGGPTGGPAS) shows a compositional bias: gly residues. A compositionally biased stretch (acidic residues) spans 647–667 (DSDEEDVQDADYEVVDEGDDE).

This sequence belongs to the heat shock protein 70 family.

In terms of biological role, acts as a chaperone. This chain is Chaperone protein DnaK, found in Salinibacter ruber (strain DSM 13855 / M31).